The sequence spans 436 residues: UBX domain-containing protein 7 (436 aa).

Lysine 19 is covalently cross-linked (Glycyl lysine isopeptide (Lys-Gly) (interchain with G-Cter in ubiquitin)). The tract at residues 115-141 is disordered; that stretch reads AGESSSRETNPGLAREEKSSRDVHRKN. One can recognise a UBX domain in the interval 212–290; sequence LHSSKCVLQI…ELTPRSALLL (79 aa). Residues 325–346 show a composition bias toward basic and acidic residues; it reads DKDPEVTSQREETSKPNRHEVR. Disordered regions lie at residues 325–357 and 371–436; these read DKDP…AASS and SSAH…EDKK. A compositionally biased stretch (low complexity) spans 347–357; it reads SSTPLSGAASS. Residues 371 to 408 are compositionally biased toward polar residues; that stretch reads SSAHASPMLTPSGTRYPSETNLTTSRSVSPNVFQFVNN. Serine 388 carries the phosphoserine modification. Basic and acidic residues predominate over residues 426–436; it reads HLEKKKDEDKK.

Interacts with CDC48.

The protein localises to the endoplasmic reticulum. Its function is as follows. Involved in CDC48-dependent protein degradation through the ubiquitin/proteasome pathway. The protein is UBX domain-containing protein 7 (UBX7) of Saccharomyces cerevisiae (strain ATCC 204508 / S288c) (Baker's yeast).